Consider the following 1186-residue polypeptide: DNA-directed RNA polymerase subunit beta (1186 aa).

Residues 1149–1186 (KEEDDDPSTSSDDLGFNIGARPDAAAKEDQVAEEPEFQ) are disordered.

The protein belongs to the RNA polymerase beta chain family. The RNAP catalytic core consists of 2 alpha, 1 beta, 1 beta' and 1 omega subunit. When a sigma factor is associated with the core the holoenzyme is formed, which can initiate transcription.

It carries out the reaction RNA(n) + a ribonucleoside 5'-triphosphate = RNA(n+1) + diphosphate. Functionally, DNA-dependent RNA polymerase catalyzes the transcription of DNA into RNA using the four ribonucleoside triphosphates as substrates. The chain is DNA-directed RNA polymerase subunit beta from Bifidobacterium adolescentis (strain ATCC 15703 / DSM 20083 / NCTC 11814 / E194a).